Here is a 583-residue protein sequence, read N- to C-terminus: Aspartate--tRNA ligase (583 aa).

Residue Glu-174 coordinates L-aspartate. Residues 198-201 (QITK) form an aspartate region. L-aspartate is bound at residue Arg-220. Residues 220–222 (RDE) and Gln-229 contribute to the ATP site. An L-aspartate-binding site is contributed by His-443. Glu-477 lines the ATP pocket. Position 484 (Arg-484) interacts with L-aspartate. ATP is bound at residue 529–532 (GLDR).

Belongs to the class-II aminoacyl-tRNA synthetase family. Type 1 subfamily. Homodimer.

The protein resides in the cytoplasm. It catalyses the reaction tRNA(Asp) + L-aspartate + ATP = L-aspartyl-tRNA(Asp) + AMP + diphosphate. Catalyzes the attachment of L-aspartate to tRNA(Asp) in a two-step reaction: L-aspartate is first activated by ATP to form Asp-AMP and then transferred to the acceptor end of tRNA(Asp). The chain is Aspartate--tRNA ligase from Streptococcus thermophilus (strain ATCC BAA-491 / LMD-9).